We begin with the raw amino-acid sequence, 140 residues long: 3-hydroxyacyl-[acyl-carrier-protein] dehydratase FabZ (140 aa).

H47 is a catalytic residue.

The protein belongs to the thioester dehydratase family. FabZ subfamily.

It is found in the cytoplasm. The catalysed reaction is a (3R)-hydroxyacyl-[ACP] = a (2E)-enoyl-[ACP] + H2O. Functionally, involved in unsaturated fatty acids biosynthesis. Catalyzes the dehydration of short chain beta-hydroxyacyl-ACPs and long chain saturated and unsaturated beta-hydroxyacyl-ACPs. The polypeptide is 3-hydroxyacyl-[acyl-carrier-protein] dehydratase FabZ (Streptococcus pneumoniae serotype 2 (strain D39 / NCTC 7466)).